The following is a 133-amino-acid chain: MSCIFCKIVKGDIPCVKLAETALSLAFLDIAPTSKGHALVIPKEHAAKMHELSDESCADILPLVKKVTKAIGPENYNVLQNNGRIAHQFVDHVHFHIIPKPNEEYGLGVGWPSYPISPEEIKALGEEISSKIK.

Residues 4–107 (IFCKIVKGDI…IPKPNEEYGL (104 aa)) form the HIT domain. AMP contacts are provided by residues 29–30 (DI), asparagine 81, 87–89 (HQF), and 94–96 (HFH). A Histidine triad motif motif is present at residues 92-96 (HVHFH). Histidine 94 serves as the catalytic Tele-AMP-histidine intermediate.

The protein belongs to the HINT family. In terms of assembly, homodimer. Requires Mg(2+) as cofactor.

The protein resides in the nucleus. The enzyme catalyses adenosine 5'-phosphoramidate + H2O = AMP + NH4(+). In terms of biological role, hydrolyzes adenosine 5'-monophosphoramidate substrates such as AMP-morpholidate, AMP-N-alanine methyl ester, AMP-alpha-acetyl lysine methyl ester and AMP-NH2. The polypeptide is Adenosine 5'-monophosphoramidase hnt1 (hnt1) (Schizosaccharomyces pombe (strain 972 / ATCC 24843) (Fission yeast)).